The chain runs to 452 residues: Na(+)/H(+) antiporter NhaA (452 aa).

The next 11 helical transmembrane spans lie at 27–47 (FSGIFLFFCAVVAMISANSAL), 67–87 (FIGMSLHHWINDVLMSFFFLM), 108–128 (AFPAIAALGGMIVPAIVYTLF), 137–157 (GFGIPMATDIAFALGVLLLLG), 166–186 (VFLVSLAVVDDLGAVVVIAIF), 194–214 (LWLLYSVVILGLLIGLNKMGV), 216–236 (SLFPYAILGVLLWITVHNCGI), 314–334 (PWSAYFIMPVFAFANAGVAIS), 343–363 (GVLPGIMLGLIVGKPVGILGL), 381–401 (WIDILGAGMLAGIGFTMSIFI), and 414–434 (VAKIAILSASLFAGALGYFFI).

This sequence belongs to the NhaA Na(+)/H(+) (TC 2.A.33) antiporter family.

It is found in the cell inner membrane. It carries out the reaction Na(+)(in) + 2 H(+)(out) = Na(+)(out) + 2 H(+)(in). Na(+)/H(+) antiporter that extrudes sodium in exchange for external protons. The chain is Na(+)/H(+) antiporter NhaA from Wolinella succinogenes (strain ATCC 29543 / DSM 1740 / CCUG 13145 / JCM 31913 / LMG 7466 / NCTC 11488 / FDC 602W) (Vibrio succinogenes).